Consider the following 266-residue polypeptide: Tropinone reductase homolog At1g07440 (266 aa).

Residue Leu18–His42 coordinates NADP(+). Position 151 (Ser151) interacts with substrate. Tyr164 serves as the catalytic Proton acceptor.

It belongs to the short-chain dehydrogenases/reductases (SDR) family. SDR65C subfamily.

This Arabidopsis thaliana (Mouse-ear cress) protein is Tropinone reductase homolog At1g07440.